Here is a 472-residue protein sequence, read N- to C-terminus: Methanethiol oxidase (472 aa).

Belongs to the selenium-binding protein family.

The protein resides in the nucleus. The protein localises to the cytoplasm. It localises to the cytosol. Its subcellular location is the membrane. It catalyses the reaction methanethiol + O2 + H2O = hydrogen sulfide + formaldehyde + H2O2 + H(+). It participates in organosulfur degradation. Functionally, catalyzes the oxidation of methanethiol, an organosulfur compound known to be produced in substantial amounts by gut bacteria. Selenium-binding protein which may be involved in the sensing of reactive xenobiotics in the cytoplasm. May be involved in intra-Golgi protein transport. The polypeptide is Methanethiol oxidase (selenbp1-b) (Xenopus laevis (African clawed frog)).